The primary structure comprises 299 residues: Cancer/testis antigen family 47 member B1 (299 aa).

Over residues M1–T10 the composition is skewed to basic and acidic residues. 2 disordered regions span residues M1–E102 and A215–T299. Composition is skewed to low complexity over residues Q20–G31 and V46–G60. A compositionally biased stretch (acidic residues) spans A81 to N101. Residues A215 to E238 are compositionally biased toward basic and acidic residues. Acidic residues-rich tracts occupy residues E239–S251 and W268–K281. Residues E270–G298 adopt a coiled-coil conformation. Over residues E282 to V293 the composition is skewed to basic and acidic residues.

The protein belongs to the CT47 family.

This is Cancer/testis antigen family 47 member B1 from Homo sapiens (Human).